The following is an 82-amino-acid chain: Protein transport protein SBH1 (82 aa).

The segment at 1-36 (MSSPTPPGGQRTLQKRKQGSSQKVAASAPKKNTNSN) is disordered. Over 1–53 (MSSPTPPGGQRTLQKRKQGSSQKVAASAPKKNTNSNNSILKIYSDEATGLRVD) the chain is Cytoplasmic. Over residues 19–36 (GSSQKVAASAPKKNTNSN) the composition is skewed to polar residues. The chain crosses the membrane as a helical span at residues 54–74 (PLVVLFLAVGFIFSVVALHVI).

The protein belongs to the SEC61-beta family. In terms of assembly, component of the heterotrimeric Sec61 complex, which is composed of SSH1, SBH1 and SSS1. Presumably three to four Sec61 heterotrimers assemble into an oligomeric ring with a central aqueous pore. In cotranslational ER import, the pore diameter varies from 9-15 A in a ribosome-free resting state to 40-60 A in a functional state when associated with the ribosome. The Sec61 complex is part of a channel-forming translocon complex whose composition seem to change dependent upon different functional states. During post-translational ER import the Sec61 complex associates with the Sec62/63 complex to form the Sec complex. SBH1 interacts OST2, OST4 and WBP1 components of the OT complex.

The protein resides in the endoplasmic reticulum membrane. Its function is as follows. Part of the Sec61 complex, which is the major component of a channel-forming translocon complex that mediates protein translocation across the endoplasmic reticulum (ER). The functional states of the translocon complex include co- and post-translational ER import, cotranslational membrane protein integration and retrograde transport of misfolded proteins out of the ER. In the cotranslational pathway, ribosomes synthesizing presecretory proteins are targeted to the translocon by the cytosolic signal recognition particle (SRP) and its ER-localized receptor. The association of the Sec61 complex with the ribosome is mediated by the 28S rRNA of the large ribosomal subunit. SRP-independent post-translational translocation requires the association of additional factors, such as the Sec62/63 complex and KAR2. This is Protein transport protein SBH1 (SBH1) from Saccharomyces cerevisiae (strain ATCC 204508 / S288c) (Baker's yeast).